The sequence spans 374 residues: Cell division protein DivIB (374 aa).

The segment at 1 to 90 (MWKISNENDI…EEEHFADRLP (90 aa)) is disordered. The Cytoplasmic segment spans residues 1–103 (MWKISNENDI…KTRNKRLYRR (103 aa)). Residues 39–53 (YLKKQAEEAASKGEN) are compositionally biased toward basic and acidic residues. Over residues 56–75 (AEVTITLQEQSQEEPQQHLP) the composition is skewed to polar residues. A helical transmembrane segment spans residues 104–124 (LAFILTCLGTAILVALYFVSP). At 125 to 374 (LSRLSEVTVS…GENQEVQQAE (250 aa)) the chain is on the extracellular side. In terms of domain architecture, POTRA spans 126-197 (SRLSEVTVSG…NSFKIDIQEY (72 aa)). A disordered region spans residues 325-374 (KESEETGSEVSEDSAVENQEVVDPNAGVATDEANNGTPTNGENQEVQQAE). Positions 326–339 (ESEETGSEVSEDSA) are enriched in acidic residues. Residues 356 to 374 (EANNGTPTNGENQEVQQAE) are compositionally biased toward polar residues.

Belongs to the FtsQ/DivIB family. DivIB subfamily.

Its subcellular location is the cell membrane. Functionally, cell division protein that may be involved in stabilizing or promoting the assembly of the division complex. This Enterococcus faecalis (strain ATCC 700802 / V583) protein is Cell division protein DivIB.